Consider the following 55-residue polypeptide: Rubredoxin-1 (55 aa).

The 54-residue stretch at 1–54 (MKKWQCVVCGLIYDEAKGWPEEGIEAGTRWEDVPEDWLCPDCGVGKLDFEMIEI) folds into the Rubredoxin-like domain. 4 residues coordinate Fe cation: Cys-6, Cys-9, Cys-39, and Cys-42.

The protein belongs to the rubredoxin family. Requires Fe(3+) as cofactor.

The protein localises to the cytoplasm. The protein operates within hydrocarbon metabolism; alkane degradation. In terms of biological role, involved in the hydrocarbon hydroxylating system, which transfers electrons from NADH to rubredoxin reductase and then through rubredoxin to alkane 1 monooxygenase. This chain is Rubredoxin-1 (rubA1), found in Pseudomonas aeruginosa (strain ATCC 15692 / DSM 22644 / CIP 104116 / JCM 14847 / LMG 12228 / 1C / PRS 101 / PAO1).